A 315-amino-acid polypeptide reads, in one-letter code: Glutathione synthetase (315 aa).

Residues Lys125–Glu310 enclose the ATP-grasp domain. Residue His151–Gly207 participates in ATP binding. Mg(2+)-binding residues include Glu281 and Asn283.

The protein belongs to the prokaryotic GSH synthase family. The cofactor is Mg(2+). Mn(2+) serves as cofactor.

It carries out the reaction gamma-L-glutamyl-L-cysteine + glycine + ATP = glutathione + ADP + phosphate + H(+). Its pathway is sulfur metabolism; glutathione biosynthesis; glutathione from L-cysteine and L-glutamate: step 2/2. The polypeptide is Glutathione synthetase (Shewanella oneidensis (strain ATCC 700550 / JCM 31522 / CIP 106686 / LMG 19005 / NCIMB 14063 / MR-1)).